The sequence spans 492 residues: Bifunctional purine biosynthesis protein PurH (492 aa).

One can recognise an MGS-like domain in the interval 1–144; that stretch reads MKKAILSVSN…KNFKHVTTIV (144 aa).

The protein belongs to the PurH family.

It carries out the reaction (6R)-10-formyltetrahydrofolate + 5-amino-1-(5-phospho-beta-D-ribosyl)imidazole-4-carboxamide = 5-formamido-1-(5-phospho-D-ribosyl)imidazole-4-carboxamide + (6S)-5,6,7,8-tetrahydrofolate. The catalysed reaction is IMP + H2O = 5-formamido-1-(5-phospho-D-ribosyl)imidazole-4-carboxamide. Its pathway is purine metabolism; IMP biosynthesis via de novo pathway; 5-formamido-1-(5-phospho-D-ribosyl)imidazole-4-carboxamide from 5-amino-1-(5-phospho-D-ribosyl)imidazole-4-carboxamide (10-formyl THF route): step 1/1. It functions in the pathway purine metabolism; IMP biosynthesis via de novo pathway; IMP from 5-formamido-1-(5-phospho-D-ribosyl)imidazole-4-carboxamide: step 1/1. The polypeptide is Bifunctional purine biosynthesis protein PurH (Staphylococcus haemolyticus (strain JCSC1435)).